The primary structure comprises 1484 residues: DNA-directed RNA polymerase subunit beta' (1484 aa).

C67, C69, C82, and C85 together coordinate Zn(2+). Residues D499, D501, and D503 each coordinate Mg(2+). Zn(2+) contacts are provided by C867, C943, C950, and C953.

This sequence belongs to the RNA polymerase beta' chain family. In terms of assembly, the RNAP catalytic core consists of 2 alpha, 1 beta, 1 beta' and 1 omega subunit. When a sigma factor is associated with the core the holoenzyme is formed, which can initiate transcription. Mg(2+) is required as a cofactor. Zn(2+) serves as cofactor.

The catalysed reaction is RNA(n) + a ribonucleoside 5'-triphosphate = RNA(n+1) + diphosphate. Functionally, DNA-dependent RNA polymerase catalyzes the transcription of DNA into RNA using the four ribonucleoside triphosphates as substrates. The sequence is that of DNA-directed RNA polymerase subunit beta' from Chlorobium phaeovibrioides (strain DSM 265 / 1930) (Prosthecochloris vibrioformis (strain DSM 265)).